Reading from the N-terminus, the 357-residue chain is Alanine racemase (357 aa).

The Proton acceptor; specific for D-alanine role is filled by K35. K35 is subject to N6-(pyridoxal phosphate)lysine. R131 is a substrate binding site. Residue Y256 is the Proton acceptor; specific for L-alanine of the active site. M304 provides a ligand contact to substrate.

This sequence belongs to the alanine racemase family. Pyridoxal 5'-phosphate is required as a cofactor.

The catalysed reaction is L-alanine = D-alanine. The protein operates within amino-acid biosynthesis; D-alanine biosynthesis; D-alanine from L-alanine: step 1/1. Its function is as follows. Catalyzes the interconversion of L-alanine and D-alanine. May also act on other amino acids. The sequence is that of Alanine racemase (alr) from Legionella pneumophila (strain Lens).